We begin with the raw amino-acid sequence, 208 residues long: EF-hand protein 5 variant 2 (208 aa).

The disordered stretch occupies residues 1-35 (MQARGTVKVQGDANVDGKMSTGQHPHHQHLNSTQA). 4 EF-hand domains span residues 64–98 (MAEG…HLTE), 99–134 (EEFH…EVDD), 135–170 (TMAD…LAER), and 171–206 (STPE…SRVN). The Ca(2+) site is built by Glu-118, Asp-123, Asp-148, Thr-152, and Tyr-154.

This is EF-hand protein 5 variant 2 from Trypanosoma cruzi.